Reading from the N-terminus, the 231-residue chain is Cytochrome c oxidase subunit 2 (231 aa).

Topologically, residues 1 to 14 are mitochondrial intermembrane; the sequence is MATPAQLGLQNATS. The helical transmembrane segment at 15 to 45 threads the bilayer; the sequence is PIMEELIAFHDHALMIIFLISSLVLYIISLM. Residues 46–59 lie on the Mitochondrial matrix side of the membrane; that stretch reads LTTKLTHTSTMNAQ. Residues 60-87 form a helical membrane-spanning segment; the sequence is EIEMIWTILPAIILIMIALPSLRILYMT. Residues 88–231 lie on the Mitochondrial intermembrane side of the membrane; sequence DEFNKPYLTL…WASYLYIVSL (144 aa). The Cu cation site is built by His161, Cys196, Glu198, Cys200, His204, and Met207. Glu198 contributes to the Mg(2+) binding site.

This sequence belongs to the cytochrome c oxidase subunit 2 family. In terms of assembly, component of the cytochrome c oxidase (complex IV, CIV), a multisubunit enzyme composed of 14 subunits. The complex is composed of a catalytic core of 3 subunits MT-CO1, MT-CO2 and MT-CO3, encoded in the mitochondrial DNA, and 11 supernumerary subunits COX4I, COX5A, COX5B, COX6A, COX6B, COX6C, COX7A, COX7B, COX7C, COX8 and NDUFA4, which are encoded in the nuclear genome. The complex exists as a monomer or a dimer and forms supercomplexes (SCs) in the inner mitochondrial membrane with NADH-ubiquinone oxidoreductase (complex I, CI) and ubiquinol-cytochrome c oxidoreductase (cytochrome b-c1 complex, complex III, CIII), resulting in different assemblies (supercomplex SCI(1)III(2)IV(1) and megacomplex MCI(2)III(2)IV(2)). Found in a complex with TMEM177, COA6, COX18, COX20, SCO1 and SCO2. Interacts with TMEM177 in a COX20-dependent manner. Interacts with COX20. Interacts with COX16. Cu cation serves as cofactor.

It localises to the mitochondrion inner membrane. The enzyme catalyses 4 Fe(II)-[cytochrome c] + O2 + 8 H(+)(in) = 4 Fe(III)-[cytochrome c] + 2 H2O + 4 H(+)(out). In terms of biological role, component of the cytochrome c oxidase, the last enzyme in the mitochondrial electron transport chain which drives oxidative phosphorylation. The respiratory chain contains 3 multisubunit complexes succinate dehydrogenase (complex II, CII), ubiquinol-cytochrome c oxidoreductase (cytochrome b-c1 complex, complex III, CIII) and cytochrome c oxidase (complex IV, CIV), that cooperate to transfer electrons derived from NADH and succinate to molecular oxygen, creating an electrochemical gradient over the inner membrane that drives transmembrane transport and the ATP synthase. Cytochrome c oxidase is the component of the respiratory chain that catalyzes the reduction of oxygen to water. Electrons originating from reduced cytochrome c in the intermembrane space (IMS) are transferred via the dinuclear copper A center (CU(A)) of subunit 2 and heme A of subunit 1 to the active site in subunit 1, a binuclear center (BNC) formed by heme A3 and copper B (CU(B)). The BNC reduces molecular oxygen to 2 water molecules using 4 electrons from cytochrome c in the IMS and 4 protons from the mitochondrial matrix. The sequence is that of Cytochrome c oxidase subunit 2 (MT-CO2) from Aotus nigriceps (Black-headed night monkey).